Consider the following 513-residue polypeptide: Histidine ammonia-lyase (513 aa).

Residues 144 to 146 (ASG) constitute a cross-link (5-imidazolinone (Ala-Gly)). Position 145 is a 2,3-didehydroalanine (Ser) (S145).

This sequence belongs to the PAL/histidase family. Post-translationally, contains an active site 4-methylidene-imidazol-5-one (MIO), which is formed autocatalytically by cyclization and dehydration of residues Ala-Ser-Gly.

It localises to the cytoplasm. The enzyme catalyses L-histidine = trans-urocanate + NH4(+). Its pathway is amino-acid degradation; L-histidine degradation into L-glutamate; N-formimidoyl-L-glutamate from L-histidine: step 1/3. In Streptococcus pyogenes serotype M49 (strain NZ131), this protein is Histidine ammonia-lyase.